An 89-amino-acid polypeptide reads, in one-letter code: uncharacterized protein (89 aa).

3 helical membrane-spanning segments follow: residues 5–27 (TLTEYCLLIFFTGFYLAVTGFTA), 32–51 (LYIGIALIYIFSHIFSKRLL), and 63–85 (LFFSVLAIIGSVFITVLCIALVA).

Its subcellular location is the cell membrane. This is an uncharacterized protein from Bacillus subtilis (strain 168).